The sequence spans 25 residues: Brevinin-2R (25 aa).

A disulfide bond links Cys-19 and Cys-25.

It belongs to the frog skin active peptide (FSAP) family. Brevinin subfamily. Expressed by the skin glands.

It localises to the secreted. Its function is as follows. Cytotoxic to cancer cells, acts via the activation of the lysosomal-mitochondrial death pathway and autophagy-like cell death. Does not show significant hemolytic activity. In Pelophylax ridibundus (Marsh frog), this protein is Brevinin-2R.